A 359-amino-acid chain; its full sequence is UDP-N-acetylglucosamine--N-acetylmuramyl-(pentapeptide) pyrophosphoryl-undecaprenol N-acetylglucosamine transferase (359 aa).

UDP-N-acetyl-alpha-D-glucosamine-binding positions include Thr-15–Gly-17, Asn-127, Arg-166, Ser-191, Ile-245, Ala-264–Glu-269, and Gln-290.

Belongs to the glycosyltransferase 28 family. MurG subfamily.

Its subcellular location is the cell inner membrane. The enzyme catalyses di-trans,octa-cis-undecaprenyl diphospho-N-acetyl-alpha-D-muramoyl-L-alanyl-D-glutamyl-meso-2,6-diaminopimeloyl-D-alanyl-D-alanine + UDP-N-acetyl-alpha-D-glucosamine = di-trans,octa-cis-undecaprenyl diphospho-[N-acetyl-alpha-D-glucosaminyl-(1-&gt;4)]-N-acetyl-alpha-D-muramoyl-L-alanyl-D-glutamyl-meso-2,6-diaminopimeloyl-D-alanyl-D-alanine + UDP + H(+). It functions in the pathway cell wall biogenesis; peptidoglycan biosynthesis. Cell wall formation. Catalyzes the transfer of a GlcNAc subunit on undecaprenyl-pyrophosphoryl-MurNAc-pentapeptide (lipid intermediate I) to form undecaprenyl-pyrophosphoryl-MurNAc-(pentapeptide)GlcNAc (lipid intermediate II). This Pseudomonas entomophila (strain L48) protein is UDP-N-acetylglucosamine--N-acetylmuramyl-(pentapeptide) pyrophosphoryl-undecaprenol N-acetylglucosamine transferase.